A 612-amino-acid chain; its full sequence is RNA-binding protein MRN1 (612 aa).

Over residues 1–28 (MVVSYNNNNNNNNNNNNNNISNNNNNNN) the composition is skewed to low complexity. Disordered stretches follow at residues 1–57 (MVVS…TYAS) and 105–125 (PTQF…SQEQ). Polar residues-rich tracts occupy residues 42–57 (YQQS…TYAS) and 115–125 (DSQQQRFSQEQ). 4 consecutive RRM domains span residues 201 to 274 (RTVY…WGKP), 292 to 379 (RNVY…KTQQ), 431 to 504 (RTVY…WGKH), and 522 to 602 (RNVY…FGKD).

Its subcellular location is the cytoplasm. RNA-binding protein that binds specific categories of mRNAs, including those that contain upstream open reading frames (uORFs) and internal ribosome entry sites (IRES). Probably involved in translational regulation. The sequence is that of RNA-binding protein MRN1 (MRN1) from Saccharomyces cerevisiae (strain ATCC 204508 / S288c) (Baker's yeast).